We begin with the raw amino-acid sequence, 440 residues long: Serine hydroxymethyltransferase (440 aa).

(6S)-5,6,7,8-tetrahydrofolate is bound by residues L119 and 123 to 125 (GHL). K228 is modified (N6-(pyridoxal phosphate)lysine). (6S)-5,6,7,8-tetrahydrofolate is bound at residue 370-372 (SPF).

The protein belongs to the SHMT family. As to quaternary structure, homodimer. Requires pyridoxal 5'-phosphate as cofactor.

Its subcellular location is the cytoplasm. The catalysed reaction is (6R)-5,10-methylene-5,6,7,8-tetrahydrofolate + glycine + H2O = (6S)-5,6,7,8-tetrahydrofolate + L-serine. The protein operates within one-carbon metabolism; tetrahydrofolate interconversion. Its pathway is amino-acid biosynthesis; glycine biosynthesis; glycine from L-serine: step 1/1. Catalyzes the reversible interconversion of serine and glycine with tetrahydrofolate (THF) serving as the one-carbon carrier. This reaction serves as the major source of one-carbon groups required for the biosynthesis of purines, thymidylate, methionine, and other important biomolecules. Also exhibits THF-independent aldolase activity toward beta-hydroxyamino acids, producing glycine and aldehydes, via a retro-aldol mechanism. This chain is Serine hydroxymethyltransferase, found in Chlorobium luteolum (strain DSM 273 / BCRC 81028 / 2530) (Pelodictyon luteolum).